We begin with the raw amino-acid sequence, 243 residues long: MLPLWIALQFLGSLPIRLPGMPTPEQLGRSLLFYPLVGLLFGVILWALNIALAGTPLLLHAALLLAVWVLLSGALHLDGLADSADAWLGGFGDRERTLTIMKDPRSGPIAVVTLVLVLLLKFAALLALIEQQQSMALIIVPLIGRAALLGLFLTTSYVRAGGLGQALADHLPRKTGWQVLAVSAAVCLVIAGFNAVVALLLAVIVFIWLRHLMVRRLGGTTGDTAGALLELLEMSVLVGLALF.

5 helical membrane passes run 31–51 (LLFY…LNIA), 57–77 (LLLH…ALHL), 109–129 (IAVV…LALI), 135–155 (MALI…FLTT), and 188–208 (LVIA…VFIW).

Belongs to the CobS family. It depends on Mg(2+) as a cofactor.

The protein resides in the cell inner membrane. The enzyme catalyses alpha-ribazole + adenosylcob(III)inamide-GDP = adenosylcob(III)alamin + GMP + H(+). It carries out the reaction alpha-ribazole 5'-phosphate + adenosylcob(III)inamide-GDP = adenosylcob(III)alamin 5'-phosphate + GMP + H(+). It participates in cofactor biosynthesis; adenosylcobalamin biosynthesis; adenosylcobalamin from cob(II)yrinate a,c-diamide: step 7/7. Its function is as follows. Joins adenosylcobinamide-GDP and alpha-ribazole to generate adenosylcobalamin (Ado-cobalamin). Also synthesizes adenosylcobalamin 5'-phosphate from adenosylcobinamide-GDP and alpha-ribazole 5'-phosphate. This chain is Adenosylcobinamide-GDP ribazoletransferase, found in Pseudomonas fluorescens (strain Pf0-1).